The following is a 38-amino-acid chain: Odorant-binding protein 2 (38 aa).

It belongs to the calycin superfamily. Lipocalin family. As to expression, nasal mucosa.

It is found in the secreted. It localises to the extracellular space. This soluble protein may play a specific role in odor discrimination and perception. The polypeptide is Odorant-binding protein 2 (Hystrix cristata (North African crested porcupine)).